A 285-amino-acid chain; its full sequence is Polyamine aminopropyltransferase (285 aa).

Residues 5–241 enclose the PABS domain; it reads DSWFTEHFQA…GWWSVTLSSK (237 aa). An S-methyl-5'-thioadenosine-binding site is contributed by Gln-35. Residues His-66 and Asp-90 each coordinate spermidine. Residues Asp-110 and 141–142 contribute to the S-methyl-5'-thioadenosine site; that span reads DG. The Proton acceptor role is filled by Asp-160. 160–163 is a binding site for spermidine; it reads DSTD. Pro-167 is an S-methyl-5'-thioadenosine binding site.

This sequence belongs to the spermidine/spermine synthase family. In terms of assembly, homodimer or homotetramer.

The protein localises to the cytoplasm. The enzyme catalyses S-adenosyl 3-(methylsulfanyl)propylamine + putrescine = S-methyl-5'-thioadenosine + spermidine + H(+). Its pathway is amine and polyamine biosynthesis; spermidine biosynthesis; spermidine from putrescine: step 1/1. In terms of biological role, catalyzes the irreversible transfer of a propylamine group from the amino donor S-adenosylmethioninamine (decarboxy-AdoMet) to putrescine (1,4-diaminobutane) to yield spermidine. The sequence is that of Polyamine aminopropyltransferase from Xylella fastidiosa (strain 9a5c).